The primary structure comprises 437 residues: Elongation factor 1-gamma (437 aa).

The residue at position 2 (A2) is an N-acetylalanine. A GST N-terminal domain is found at 2 to 87; it reads AAGTLYTYPE…YVSNEELRGS (86 aa). Positions 88 to 216 constitute a GST C-terminal domain; sequence TPEAAAQVVQ…VKLCEKMAQF (129 aa). Residues K147 and K212 each carry the N6-acetyllysine modification. Positions 221-254 are enriched in basic and acidic residues; it reads FAESQPKKDTPRKEKGSREEKQKPQTERKEEKKA. A disordered region spans residues 221 to 268; the sequence is FAESQPKKDTPRKEKGSREEKQKPQTERKEEKKAAAPAPEEEMDECEQ. A Glycyl lysine isopeptide (Lys-Gly) (interchain with G-Cter in SUMO1) cross-link involves residue K253. The EF-1-gamma C-terminal domain occupies 276-437; sequence AKDPFAHLPK…KAVNQGKIFK (162 aa). K285 is covalently cross-linked (Glycyl lysine isopeptide (Lys-Gly) (interchain with G-Cter in SUMO2)). K401 is subject to N6-acetyllysine. The residue at position 434 (K434) is an N6-acetyllysine; alternate. The residue at position 434 (K434) is an N6-malonyllysine; alternate.

As to quaternary structure, EF-1 is composed of four subunits: alpha, beta, delta, and gamma.

Functionally, probably plays a role in anchoring the complex to other cellular components. This chain is Elongation factor 1-gamma (Eef1g), found in Rattus norvegicus (Rat).